A 168-amino-acid chain; its full sequence is Lipoprotein signal peptidase (168 aa).

Transmembrane regions (helical) follow at residues 6-26, 70-90, and 98-118; these read VLAA…DQIT, WFLA…IAKL, and ALAL…RMLL. Active-site residues include Asp123 and Asp141. A helical transmembrane segment spans residues 139–159; it reads IADSAICIGAALLVWDSLFGT.

The protein belongs to the peptidase A8 family.

The protein localises to the cell inner membrane. The enzyme catalyses Release of signal peptides from bacterial membrane prolipoproteins. Hydrolyzes -Xaa-Yaa-Zaa-|-(S,diacylglyceryl)Cys-, in which Xaa is hydrophobic (preferably Leu), and Yaa (Ala or Ser) and Zaa (Gly or Ala) have small, neutral side chains.. It functions in the pathway protein modification; lipoprotein biosynthesis (signal peptide cleavage). Its function is as follows. This protein specifically catalyzes the removal of signal peptides from prolipoproteins. The protein is Lipoprotein signal peptidase of Teredinibacter turnerae (strain ATCC 39867 / T7901).